The sequence spans 255 residues: Protein BEAN1 (255 aa).

A helical transmembrane segment spans residues 37 to 57 (VLVASAVIGVVITLSCITIIV). Residues 69–90 (QRHHHRHRRHHHHHRHRRRRHR) show a composition bias toward basic residues. Disordered regions lie at residues 69 to 109 (QRHH…MPYA) and 160 to 255 (DAPP…ERIV). A compositionally biased stretch (polar residues) spans 193 to 206 (QRTQGQSRLHTVSM). Over residues 217 to 226 (GTGSPSDLLP) the composition is skewed to low complexity. A compositionally biased stretch (polar residues) spans 234–243 (PSNSQGSPIP). Positions 244 to 255 (TQAPMPSPERIV) are enriched in pro residues.

As to quaternary structure, interacts with NEDD4.

Its subcellular location is the membrane. This Mus musculus (Mouse) protein is Protein BEAN1 (Bean1).